The primary structure comprises 430 residues: 3-phosphoshikimate 1-carboxyvinyltransferase (430 aa).

3-phosphoshikimate is bound by residues lysine 20, serine 21, and arginine 25. Lysine 20 lines the phosphoenolpyruvate pocket. Positions 90 and 118 each coordinate phosphoenolpyruvate. Residues serine 163, serine 164, glutamine 165, serine 191, aspartate 311, and lysine 338 each contribute to the 3-phosphoshikimate site. Glutamine 165 provides a ligand contact to phosphoenolpyruvate. Residue aspartate 311 is the Proton acceptor of the active site. Phosphoenolpyruvate contacts are provided by arginine 342 and arginine 383.

Belongs to the EPSP synthase family. Monomer.

It localises to the cytoplasm. The enzyme catalyses 3-phosphoshikimate + phosphoenolpyruvate = 5-O-(1-carboxyvinyl)-3-phosphoshikimate + phosphate. Its pathway is metabolic intermediate biosynthesis; chorismate biosynthesis. In terms of biological role, catalyzes the transfer of the enolpyruvyl moiety of phosphoenolpyruvate (PEP) to the 5-hydroxyl of shikimate-3-phosphate (S3P) to produce enolpyruvyl shikimate-3-phosphate and inorganic phosphate. This Methanosarcina mazei (strain ATCC BAA-159 / DSM 3647 / Goe1 / Go1 / JCM 11833 / OCM 88) (Methanosarcina frisia) protein is 3-phosphoshikimate 1-carboxyvinyltransferase.